The primary structure comprises 184 residues: uncharacterized protein (184 aa).

Residues Met1 to Gly20 form the signal peptide.

This is an uncharacterized protein from Drosophila melanogaster (Fruit fly).